We begin with the raw amino-acid sequence, 182 residues long: MRYTTDIKKSPPQLLKTFAVCDISLYDICDYNVTRDQCKELGCCFYKGVCYKKVVPIYVQMFSTLIVLVTGIIIITIIYRIVQEIKRQMKLSMNSTPKASKKRSAFRPFSRDPSRAPSRSPSRTSSTLSSRSPTTAPTTAPTTDPATDPATDPATDPATDPATDPATDPATAPPTDPSENPP.

Residues 1–56 are Extracellular-facing; sequence MRYTTDIKKSPPQLLKTFAVCDISLYDICDYNVTRDQCKELGCCFYKGVCYKKVVP. Residues 57–77 traverse the membrane as a helical segment; sequence IYVQMFSTLIVLVTGIIIITI. Residues 78 to 182 lie on the Cytoplasmic side of the membrane; that stretch reads IYRIVQEIKR…PPTDPSENPP (105 aa). Residues 91–182 form a disordered region; the sequence is LSMNSTPKAS…PPTDPSENPP (92 aa). Over residues 115-170 the composition is skewed to low complexity; sequence RAPSRSPSRTSSTLSSRSPTTAPTTAPTTDPATDPATDPATDPATDPATDPATDPA. The segment covering 171–182 has biased composition (pro residues); that stretch reads TAPPTDPSENPP.

Its subcellular location is the membrane. The polypeptide is Testis-expressed protein 29 (Tex29) (Rattus norvegicus (Rat)).